We begin with the raw amino-acid sequence, 191 residues long: Protein Ves (191 aa).

It belongs to the Ves family.

The chain is Protein Ves from Escherichia fergusonii (strain ATCC 35469 / DSM 13698 / CCUG 18766 / IAM 14443 / JCM 21226 / LMG 7866 / NBRC 102419 / NCTC 12128 / CDC 0568-73).